The primary structure comprises 513 residues: GMP synthase [glutamine-hydrolyzing] (513 aa).

A Glutamine amidotransferase type-1 domain is found at methionine 8 to glutamate 198. The Nucleophile role is filled by cysteine 85. Active-site residues include histidine 172 and glutamate 174. The GMPS ATP-PPase domain occupies tryptophan 199–arginine 388. Residue serine 226–serine 232 participates in ATP binding.

Homodimer.

The catalysed reaction is XMP + L-glutamine + ATP + H2O = GMP + L-glutamate + AMP + diphosphate + 2 H(+). It functions in the pathway purine metabolism; GMP biosynthesis; GMP from XMP (L-Gln route): step 1/1. Catalyzes the synthesis of GMP from XMP. This Bacillus licheniformis (strain ATCC 14580 / DSM 13 / JCM 2505 / CCUG 7422 / NBRC 12200 / NCIMB 9375 / NCTC 10341 / NRRL NRS-1264 / Gibson 46) protein is GMP synthase [glutamine-hydrolyzing].